We begin with the raw amino-acid sequence, 100 residues long: MHLSPQEKDKLLIFSAALLAERRLSRGLKLNYPETVAFLSFQVLEGARDGKSVSQLMSEGTTWLSKSQVMEGIPEMVDEVQIEAVFPDGTKLVTIHNPIN.

It belongs to the urease gamma subunit family. In terms of assembly, heterotrimer of UreA (gamma), UreB (beta) and UreC (alpha) subunits. Three heterotrimers associate to form the active enzyme.

Its subcellular location is the cytoplasm. It catalyses the reaction urea + 2 H2O + H(+) = hydrogencarbonate + 2 NH4(+). The protein operates within nitrogen metabolism; urea degradation; CO(2) and NH(3) from urea (urease route): step 1/1. The polypeptide is Urease subunit gamma (Prochlorococcus marinus (strain MIT 9301)).